Reading from the N-terminus, the 557-residue chain is MFKSDIEIAQESKMKNIKNIAEKIGLTEEDIDLYGKYKCKISLDVLESNKDKKDGKLILVTAINPTPAGEGKSTVTVGLGQALWKKNKKAVIALREPSLGPVFGIKGGAAGGGYSQVVPMEDINLHFTGDMHAITSANNLLAAAIDNHIHQGNILKIDQRRILFKRVMDMNDRALRNVIVALGGKINGFPREDGFMITVASEIMAILCLAEDLMDLKNKMGEILVAYSTEGKPIYCKDLEVQGAMALLMKDAIKPNLVQTLENTPAIIHGGPFANIAHGCNSILGTKMALKLGDYVITEAGFGADLGAEKFFDIKCRKANLKPNCVVIVATVRALKYNGGIPKENLKEQNMEALSKGIKNLGKHIENVNKFGVPAVVAINKFISDTEEEIEFIKKYCKELGAEVSIAEVWEKGGNGGLELADKVLDTIENKESKFNPIYEETLNIKQKIETIAQEIYGAEGVDYSKEAEKQISEIEKLDLDKKPVCMAKTQYSLSDDAKLLGRPCGFRINVKEVRISNGAGFIVVLTGNVMTMPGLPKKPAANNMDVLSDGNIVGLF.

Residue 66 to 73 coordinates ATP; that stretch reads TPAGEGKS.

It belongs to the formate--tetrahydrofolate ligase family.

It catalyses the reaction (6S)-5,6,7,8-tetrahydrofolate + formate + ATP = (6R)-10-formyltetrahydrofolate + ADP + phosphate. It functions in the pathway one-carbon metabolism; tetrahydrofolate interconversion. The chain is Formate--tetrahydrofolate ligase from Clostridium botulinum (strain Okra / Type B1).